Reading from the N-terminus, the 177-residue chain is Large ribosomal subunit protein uL6 (177 aa).

The protein belongs to the universal ribosomal protein uL6 family. Part of the 50S ribosomal subunit.

Functionally, this protein binds to the 23S rRNA, and is important in its secondary structure. It is located near the subunit interface in the base of the L7/L12 stalk, and near the tRNA binding site of the peptidyltransferase center. The polypeptide is Large ribosomal subunit protein uL6 (Natronomonas pharaonis (strain ATCC 35678 / DSM 2160 / CIP 103997 / JCM 8858 / NBRC 14720 / NCIMB 2260 / Gabara) (Halobacterium pharaonis)).